Reading from the N-terminus, the 500-residue chain is L-arabinose isomerase (500 aa).

Mn(2+) contacts are provided by Glu306, Glu333, His350, and His450.

Belongs to the arabinose isomerase family. In terms of assembly, homohexamer. The cofactor is Mn(2+).

The enzyme catalyses beta-L-arabinopyranose = L-ribulose. It functions in the pathway carbohydrate degradation; L-arabinose degradation via L-ribulose; D-xylulose 5-phosphate from L-arabinose (bacterial route): step 1/3. Functionally, catalyzes the conversion of L-arabinose to L-ribulose. The chain is L-arabinose isomerase from Enterobacter sp. (strain 638).